Reading from the N-terminus, the 234-residue chain is MQLITTENKLAGSKKALEIIEKGITSGEVNTLGLATGSTPETLYAELVKSDVDTKNVTTTNLDEYVGLAASDPNSYHYYMNDLLFSKKAFKESFLPNGEATDAEAECARYEEILSEHPIDIQVLGIGTNGHIGFNEPGTSFDSITHKVVLTDSTREANKRFFEREEDVPTHAYSMGIKSIMNAKKIILLAFGENKAQAIKETIKGPVDVNCPASVLQNHPDVTVILDNEAASLL.

Aspartate 63 functions as the Proton acceptor; for enolization step in the catalytic mechanism. The active-site For ring-opening step is asparagine 129. The Proton acceptor; for ring-opening step role is filled by histidine 131. The active-site For ring-opening step is the glutamate 136.

This sequence belongs to the glucosamine/galactosamine-6-phosphate isomerase family. NagB subfamily.

It carries out the reaction alpha-D-glucosamine 6-phosphate + H2O = beta-D-fructose 6-phosphate + NH4(+). The protein operates within amino-sugar metabolism; N-acetylneuraminate degradation; D-fructose 6-phosphate from N-acetylneuraminate: step 5/5. Catalyzes the reversible isomerization-deamination of glucosamine 6-phosphate (GlcN6P) to form fructose 6-phosphate (Fru6P) and ammonium ion. This is Glucosamine-6-phosphate deaminase from Listeria monocytogenes serovar 1/2a (strain ATCC BAA-679 / EGD-e).